A 676-amino-acid polypeptide reads, in one-letter code: Envelope glycoprotein (676 aa).

The signal sequence occupies residues 1–32 (MEGLSLLQLPRDKFRKSSFFVWVIILFQKAFS). The Extracellular segment spans residues 33–650 (MPLGVVTNST…DDNWWTGWRQ (618 aa)). N-linked (GlcNAc...) asparagine; by host glycosylation occurs at Asn-40. 5 disulfide bridges follow: Cys-53-Cys-609, Cys-108-Cys-135, Cys-121-Cys-147, Cys-511-Cys-556, and Cys-601-Cys-608. The interval 54–201 (KDHLASTDQL…TFLQSPPIRE (148 aa)) is receptor-binding. N-linked (GlcNAc...) asparagine; by host glycosylation is found at Asn-204, Asn-208, Asn-238, Asn-257, Asn-268, Asn-296, and Asn-314. Residues 305-485 (ELSFETLSLN…STSNGLITST (181 aa)) form a mucin-like region region. A disordered region spans residues 312-351 (SLNETEDDDATSSRTTKGRISDRATRKYSDLVPKDSPGMV). A compositionally biased stretch (basic and acidic residues) spans 330–344 (RISDRATRKYSDLVP). N-linked (GlcNAc...) asparagine; by host glycosylation occurs at Asn-366. The segment at 406–458 (SSSQILSSSPTMAPSPETQTSTTYTPKLPVMTTEEPTTPPRNSPGSTTEAPTL) is disordered. 2 stretches are compositionally biased toward polar residues: residues 415-430 (PTMA…TTYT) and 448-458 (SPGSTTEAPTL). A glycan (N-linked (GlcNAc...) asparagine; by host) is linked at Asn-463. The tract at residues 524-539 (HNAAGIAWIPYFGPGA) is fusion peptide. Residues 554 to 595 (LVCGLRQLANETTQALQLFLRATTELRTYTILNRKAIDFLLR) adopt a coiled-coil conformation. Asn-563 carries N-linked (GlcNAc...) asparagine; by host glycosylation. Residues 615–634 (WTKNITDKINQIIHDFIDNP) are a coiled coil. Residue Asn-618 is glycosylated (N-linked (GlcNAc...) asparagine; by host). A helical membrane pass occupies residues 651 to 671 (WIPAGIGITGIIIAIIALLCV). 2 S-palmitoyl cysteine; by host lipidation sites follow: Cys-670 and Cys-672. The Cytoplasmic segment spans residues 672–676 (CKLLC).

The protein belongs to the filoviruses glycoprotein family. Homotrimer; each monomer consists of a GP1 and a GP2 subunit linked by disulfide bonds. The resulting peplomers (GP1,2) protrude from the virus surface as spikes. Interacts with host integrin alpha-V/ITGAV. Interacts with host CLEC10A. Binds also to host CD209 and CLEC4M/DC-SIGN(R). Interacts with host FOLR1. Interacts with BST2; this interaction inhibits the antiviral effect of BST2 and this allows viral release from infected cells. Interacts with host FCN1; this interaction enhances viral entry. Interacts with host TLR4; this interaction induces cell death in T-lymphocytes or proinflammatory cytokines and SOCS1 production in monocytes. As to quaternary structure, interacts with host entry receptor NPC1. In terms of assembly, GP1 and GP2delta are part of GP1,2delta soluble complexes released by ectodomain shedding. Post-translationally, the signal peptide region modulates GP's high mannose glycosylation, thereby determining the efficiency of the interactions with DC-SIGN(R). In terms of processing, N-glycosylated. O-glycosylated in the mucin-like region. Post-translationally, palmitoylation of GP2 is not required for its function. In terms of processing, specific enzymatic cleavages in vivo yield mature proteins. The precursor is processed into GP1 and GP2 by host cell furin in the trans Golgi, and maybe by other host proteases, to yield the mature GP1 and GP2 proteins. The cleavage site corresponds to the furin optimal cleavage sequence [KR]-X-[KR]-R. This cleavage does not seem to be required for function. After the internalization of the virus into cell endosomes, GP1 C-terminus is removed by the endosomal proteases cathepsin B, cathepsin L, or both, leaving a 19-kDa N-terminal fragment which is further digested by cathepsin B. Proteolytic processing of GP1,2 by host ADAM17 can remove the transmembrane anchor of GP2 and leads to shedding of complexes consisting in GP1 and truncated GP2 (GP1,2delta).

Its subcellular location is the virion membrane. It localises to the host cell membrane. The protein resides in the secreted. Trimeric GP1,2 complexes form the virion surface spikes and mediate the viral entry processes, with GP1 acting as the receptor-binding subunit and GP2 as the membrane fusion subunit. At later times of infection, down-regulates the expression of various host cell surface molecules that are essential for immune surveillance and cell adhesion. Down-modulates several integrins including ITGA1, ITGA2, ITGA3, ITGA4, ITGA5, ITGA6, ITGAV and ITGB1. This decrease in cell adhesion molecules may lead to cell detachment, contributing to the disruption of blood vessel integrity and hemorrhages developed during infection (cytotoxicity). Interacts with host TLR4 and thereby stimulates the differentiation and activation of monocytes leading to bystander death of T-lymphocytes. Down-regulates as well the function of host natural killer cells. Counteracts the antiviral effect of host BST2/tetherin that restricts release of progeny virions from infected cells. However, cooperates with VP40 and host BST2 to activate canonical NF-kappa-B pathway in a manner dependent on neddylation. Functionally, functions as a decoy for anti-GP1,2 antibodies thereby contributing to viral immune evasion. Interacts and activates host macrophages and dendritic cells inducing up-regulation of cytokine transcription. This effect is mediated throught activation of host TLR4. Its function is as follows. Responsible for binding to the receptor(s) on target cells. Interacts with CD209/DC-SIGN and CLEC4M/DC-SIGNR which act as cofactors for virus entry into dendritic cells (DCs) and endothelial cells. Binding to the macrophage specific lectin CLEC10A also seems to enhance virus infectivity. Interaction with FOLR1/folate receptor alpha may be a cofactor for virus entry in some cell types, although results are contradictory. Members of the Tyro3 receptor tyrosine kinase family also seem to be cell entry factors in filovirus infection. Once attached, the virions are internalized through clathrin-dependent endocytosis and/or macropinocytosis. After internalization of the virus into the endosomes of the host cell, proteolysis of GP1 by two cysteine proteases, CTSB/cathepsin B and CTSL/cathepsin L removes the glycan cap and allows GP1 binding to the host entry receptor NPC1. NPC1-binding, Ca(2+) and acidic pH induce a conformational change of GP2, which unmasks its fusion peptide and permit membranes fusion. In terms of biological role, acts as a class I viral fusion protein. Under the current model, the protein has at least 3 conformational states: pre-fusion native state, pre-hairpin intermediate state, and post-fusion hairpin state. During viral and target cell membrane fusion, the coiled coil regions (heptad repeats) assume a trimer-of-hairpins structure, positioning the fusion peptide in close proximity to the C-terminal region of the ectodomain. The formation of this structure appears to drive apposition and subsequent fusion of viral and target cell membranes. Responsible for penetration of the virus into the cell cytoplasm by mediating the fusion of the membrane of the endocytosed virus particle with the endosomal membrane. Low pH in endosomes induces an irreversible conformational change in GP2, releasing the fusion hydrophobic peptide. This chain is Envelope glycoprotein (GP), found in Sudan ebolavirus (strain Maleo-79) (SEBOV).